The chain runs to 296 residues: Ribosomal protein L11 methyltransferase (296 aa).

Positions 147, 168, 190, and 232 each coordinate S-adenosyl-L-methionine.

The protein belongs to the methyltransferase superfamily. PrmA family.

Its subcellular location is the cytoplasm. It catalyses the reaction L-lysyl-[protein] + 3 S-adenosyl-L-methionine = N(6),N(6),N(6)-trimethyl-L-lysyl-[protein] + 3 S-adenosyl-L-homocysteine + 3 H(+). Its function is as follows. Methylates ribosomal protein L11. This chain is Ribosomal protein L11 methyltransferase, found in Marinomonas sp. (strain MWYL1).